A 154-amino-acid polypeptide reads, in one-letter code: MGVLTDVQVALVKSSFEEFNANIPKNTHRFFTLVLEIAPGAKDLFSFLKGSSEVPQNNPDLQAHAGKVFKLTYEAAIQLQVNGAVASDATLKSLGSVHVSKGVVDAHFPVVKEAILKTIKEVVGDKWSEELNTAWTIAYDELAIIIKKEMKDAA.

A Globin domain is found at 3-151 (VLTDVQVALV…LAIIIKKEMK (149 aa)). Serine 46 lines the heme b pocket. Position 46 is a phosphoserine (serine 46). Histidine 64 is a binding site for O2. 3 residues coordinate heme b: lysine 67, histidine 98, and lysine 101. Tyrosine 139 is modified (nitrated tyrosine).

Belongs to the plant globin family. As to quaternary structure, monomer. Nitrated in effective nodules and particularly in hypoxic conditions; this mechanism may play a protective role in the symbiosis by buffering toxic peroxynitrite NO(2)(-). Nitration level decrease during nodule senescence. In terms of processing, phosphorylation at Ser-46 disrupts the molecular environment of its porphyrin ring oxygen binding pocket, thus leading to a reduced oxygen consumption and to the delivery of oxygen O(2) to symbiosomes. In terms of tissue distribution, accumulates in developing root nodules and present in roots, especially in the upper part. Detected in leaves at low levels.

The protein localises to the cytoplasm. Its subcellular location is the cytosol. The protein resides in the nucleus. Functionally, leghemoglobin that reversibly binds oxygen O(2) through a pentacoordinated heme iron. In root nodules, facilitates the diffusion of oxygen to the bacteroids while preventing the bacterial nitrogenase from being inactivated by buffering dioxygen, nitric oxide and carbon monoxide, and promoting the formation of reactive oxygen species (ROS, e.g. H(2)O(2)). This role is essential for symbiotic nitrogen fixation (SNF). In Lupinus luteus (European yellow lupine), this protein is Leghemoglobin-1.